The chain runs to 102 residues: Large ribosomal subunit protein bL21 (102 aa).

It belongs to the bacterial ribosomal protein bL21 family. In terms of assembly, part of the 50S ribosomal subunit. Contacts protein L20.

In terms of biological role, this protein binds to 23S rRNA in the presence of protein L20. The protein is Large ribosomal subunit protein bL21 of Syntrophotalea carbinolica (strain DSM 2380 / NBRC 103641 / GraBd1) (Pelobacter carbinolicus).